A 707-amino-acid polypeptide reads, in one-letter code: SPX domain-containing membrane protein At4g11810 (707 aa).

In terms of domain architecture, SPX spans 2–145; the sequence is VAFGKKLKER…GYRFTNYYVK (144 aa). Helical transmembrane passes span 252–272, 283–303, 320–340, 342–361, 380–400, and 416–436; these read FMSL…TYII, LGAA…AQLF, LIFS…AYDF, SLAL…ARAV, AGFV…AGLL, and LPGW…AISF. The segment covering 481-498 has biased composition (acidic residues); it reads EETEHDEEDDGDGSEESS. The segment at 481–503 is disordered; sequence EETEHDEEDDGDGSEESSDDSRK. 5 helical membrane-spanning segments follow: residues 523–543, 557–577, 586–606, 614–634, and 679–699; these read LLIY…SSVV, IFLF…GSYI, ILLA…HVVI, VISG…NLSL, and MLLN…ILAT.

The protein belongs to the major facilitator superfamily.

It localises to the membrane. The polypeptide is SPX domain-containing membrane protein At4g11810 (Arabidopsis thaliana (Mouse-ear cress)).